Reading from the N-terminus, the 151-residue chain is Globin-2 B chain (151 aa).

An N-acetylserine modification is found at Ser1. The Globin domain maps to 11–151; it reads VSNADQKDLL…SLVAVVQASL (141 aa). Residue His103 coordinates heme b.

This sequence belongs to the globin family. Heterotetramer of two alpha chains and two beta chains.

The sequence is that of Globin-2 B chain from Anadara inaequivalvis (Inequivalve ark).